A 385-amino-acid chain; its full sequence is Probable tRNA sulfurtransferase (385 aa).

The 104-residue stretch at 57–160 (DGVIERVKKV…RGNAYVFTDK (104 aa)) folds into the THUMP domain. ATP contacts are provided by residues 180 to 181 (ML), 205 to 206 (YY), Arg-262, Gly-284, and Gln-293.

It belongs to the ThiI family.

Its subcellular location is the cytoplasm. The enzyme catalyses [ThiI sulfur-carrier protein]-S-sulfanyl-L-cysteine + a uridine in tRNA + 2 reduced [2Fe-2S]-[ferredoxin] + ATP + H(+) = [ThiI sulfur-carrier protein]-L-cysteine + a 4-thiouridine in tRNA + 2 oxidized [2Fe-2S]-[ferredoxin] + AMP + diphosphate. It catalyses the reaction [ThiS sulfur-carrier protein]-C-terminal Gly-Gly-AMP + S-sulfanyl-L-cysteinyl-[cysteine desulfurase] + AH2 = [ThiS sulfur-carrier protein]-C-terminal-Gly-aminoethanethioate + L-cysteinyl-[cysteine desulfurase] + A + AMP + 2 H(+). The protein operates within cofactor biosynthesis; thiamine diphosphate biosynthesis. Its function is as follows. Catalyzes the ATP-dependent transfer of a sulfur to tRNA to produce 4-thiouridine in position 8 of tRNAs, which functions as a near-UV photosensor. Also catalyzes the transfer of sulfur to the sulfur carrier protein ThiS, forming ThiS-thiocarboxylate. This is a step in the synthesis of thiazole, in the thiamine biosynthesis pathway. The sulfur is donated as persulfide by IscS. This chain is Probable tRNA sulfurtransferase, found in Clostridium perfringens (strain SM101 / Type A).